We begin with the raw amino-acid sequence, 122 residues long: Small ribosomal subunit protein uS13 (122 aa).

The interval 95 to 122 is disordered; sequence GLPVRGQRTKTNARTRKGPKKTIAGKKK.

Belongs to the universal ribosomal protein uS13 family. Part of the 30S ribosomal subunit. Forms a loose heterodimer with protein S19. Forms two bridges to the 50S subunit in the 70S ribosome.

Functionally, located at the top of the head of the 30S subunit, it contacts several helices of the 16S rRNA. In the 70S ribosome it contacts the 23S rRNA (bridge B1a) and protein L5 of the 50S subunit (bridge B1b), connecting the 2 subunits; these bridges are implicated in subunit movement. Contacts the tRNAs in the A and P-sites. This is Small ribosomal subunit protein uS13 from Corynebacterium glutamicum (strain ATCC 13032 / DSM 20300 / JCM 1318 / BCRC 11384 / CCUG 27702 / LMG 3730 / NBRC 12168 / NCIMB 10025 / NRRL B-2784 / 534).